Here is a 225-residue protein sequence, read N- to C-terminus: UPF0758 protein BcerKBAB4_4299 (225 aa).

The 123-residue stretch at 103–225 folds into the MPN domain; sequence SIRSPEDCAS…FVSLKEKGHI (123 aa). The Zn(2+) site is built by H174, H176, and D187. Residues 174–187 carry the JAMM motif motif; that stretch reads HNHPSGDPAPSRED.

It belongs to the UPF0758 family.

The protein is UPF0758 protein BcerKBAB4_4299 of Bacillus mycoides (strain KBAB4) (Bacillus weihenstephanensis).